The sequence spans 379 residues: Anomalous homeobox protein (379 aa).

A DNA-binding region (homeobox) is located at residues proline 135 to proline 196. The interval leucine 195–proline 283 is disordered. Residues glutamine 237 to glycine 246 are compositionally biased toward basic and acidic residues.

It is found in the nucleus. This chain is Anomalous homeobox protein (ANHX), found in Homo sapiens (Human).